The primary structure comprises 219 residues: MTNRPATPADSRKLWDISPPLSPATPVWPGDTPFQQETAWQMDEHCPVNVGRITLSPHTGAHADAPLHYAADGAPIGEVGLEPYLGRCRVIHCVGATPVVAPHHVEHALNDLPTRVLLRTYKRAPLDQWDTGFCAVAPETIALLAAHGVQLIGIDTPSLDPQESKTMDAHKAVRRHGLAILEGLVLDAVAEGDYELIALPLRFTGLDASPVRAVLRSLD.

W28 provides a ligand contact to substrate. Positions 58, 62, and 64 each coordinate Zn(2+). The active-site Proton donor/acceptor is H68. Zn(2+)-binding residues include H170 and E182.

The protein belongs to the Cyclase 1 superfamily. KynB family. As to quaternary structure, homodimer. It depends on Zn(2+) as a cofactor.

It carries out the reaction N-formyl-L-kynurenine + H2O = L-kynurenine + formate + H(+). Its pathway is amino-acid degradation; L-tryptophan degradation via kynurenine pathway; L-kynurenine from L-tryptophan: step 2/2. Catalyzes the hydrolysis of N-formyl-L-kynurenine to L-kynurenine, the second step in the kynurenine pathway of tryptophan degradation. This is Kynurenine formamidase from Cupriavidus pinatubonensis (strain JMP 134 / LMG 1197) (Cupriavidus necator (strain JMP 134)).